Here is a 373-residue protein sequence, read N- to C-terminus: GDP-mannose 4,6 dehydratase 2 (373 aa).

Polar residues predominate over residues 1–15; sequence MASENNGSRSDSESI. A disordered region spans residues 1–21; it reads MASENNGSRSDSESITAPKAD. Residues 35 to 40, Arg60, 91 to 92, 113 to 117, and Tyr128 each bind NADP(+); these read GITGQD, DL, and LAAQS. Ser117 is a binding site for substrate. Position 162 (Ser162) interacts with substrate. The active site involves Ser162. Active-site nucleophile residues include Glu164 and Tyr185. Tyr185 is a substrate binding site. Lys189 is a binding site for NADP(+). Asn214 lines the substrate pocket. The NADP(+) site is built by His215 and Arg220. Substrate is bound by residues 220-228, Gly247, Arg253, and 314-317; these read RGENFVTRK and RPAE.

The protein belongs to the NAD(P)-dependent epimerase/dehydratase family. GDP-mannose 4,6-dehydratase subfamily. Homotetramer. Binds to GER1. Requires NADP(+) as cofactor. Expressed in roots, flowers, siliques, leaves and stems. Not expressed in the root meristem and the proximal part of the elongation zone, or in emerging lateral roots. Expressed in trichomes and guard cells, and in pollen just before anthesis.

It carries out the reaction GDP-alpha-D-mannose = GDP-4-dehydro-alpha-D-rhamnose + H2O. It functions in the pathway nucleotide-sugar biosynthesis; GDP-L-fucose biosynthesis via de novo pathway; GDP-L-fucose from GDP-alpha-D-mannose: step 1/2. Its function is as follows. Catalyzes the conversion of GDP-D-mannose to GDP-4-dehydro-6-deoxy-D-mannose. The polypeptide is GDP-mannose 4,6 dehydratase 2 (MUR1) (Arabidopsis thaliana (Mouse-ear cress)).